Reading from the N-terminus, the 313-residue chain is Porphobilinogen deaminase (313 aa).

Cys-240 bears the S-(dipyrrolylmethanemethyl)cysteine mark.

This sequence belongs to the HMBS family. As to quaternary structure, monomer. It depends on dipyrromethane as a cofactor.

The enzyme catalyses 4 porphobilinogen + H2O = hydroxymethylbilane + 4 NH4(+). Its pathway is porphyrin-containing compound metabolism; protoporphyrin-IX biosynthesis; coproporphyrinogen-III from 5-aminolevulinate: step 2/4. Functionally, tetrapolymerization of the monopyrrole PBG into the hydroxymethylbilane pre-uroporphyrinogen in several discrete steps. The chain is Porphobilinogen deaminase from Moorella thermoacetica (strain ATCC 39073 / JCM 9320).